Here is a 700-residue protein sequence, read N- to C-terminus: Elongation factor G (700 aa).

The tr-type G domain maps to 8–290; it reads ERYRNIGISA…AVIDYLPAPT (283 aa). Residues 17 to 24, 88 to 92, and 142 to 145 each bind GTP; these read AHIDAGKT, DTPGH, and NKMD.

Belongs to the TRAFAC class translation factor GTPase superfamily. Classic translation factor GTPase family. EF-G/EF-2 subfamily.

The protein localises to the cytoplasm. Its function is as follows. Catalyzes the GTP-dependent ribosomal translocation step during translation elongation. During this step, the ribosome changes from the pre-translocational (PRE) to the post-translocational (POST) state as the newly formed A-site-bound peptidyl-tRNA and P-site-bound deacylated tRNA move to the P and E sites, respectively. Catalyzes the coordinated movement of the two tRNA molecules, the mRNA and conformational changes in the ribosome. The chain is Elongation factor G (fusA) from Pasteurella multocida (strain Pm70).